The sequence spans 316 residues: Formimidoylglutamase (316 aa).

Positions 127, 156, 158, 160, 247, and 249 each coordinate Mn(2+).

The protein belongs to the arginase family. It depends on Mn(2+) as a cofactor.

The catalysed reaction is N-formimidoyl-L-glutamate + H2O = formamide + L-glutamate. It functions in the pathway amino-acid degradation; L-histidine degradation into L-glutamate; L-glutamate from N-formimidoyl-L-glutamate (hydrolase route): step 1/1. In terms of biological role, catalyzes the conversion of N-formimidoyl-L-glutamate to L-glutamate and formamide. The chain is Formimidoylglutamase from Cupriavidus pinatubonensis (strain JMP 134 / LMG 1197) (Cupriavidus necator (strain JMP 134)).